Here is a 262-residue protein sequence, read N- to C-terminus: Carbonic anhydrase 13 (262 aa).

An Alpha-carbonic anhydrase domain is found at 4-261; that stretch reads LSWGYGEHNG…LKGRRVRASF (258 aa). Catalysis depends on His65, which acts as the Proton donor/acceptor. Zn(2+)-binding residues include His95, His97, and His120. 200–201 contributes to the substrate binding site; that stretch reads TV.

It belongs to the alpha-carbonic anhydrase family. Requires Zn(2+) as cofactor. As to expression, expressed in spleen, lung, kidney, heart, brain, skeletal muscle and testis.

It carries out the reaction hydrogencarbonate + H(+) = CO2 + H2O. Inhibited by coumarins, sulfonamide derivatives such as acetazolamide (AZA) and Foscarnet (phosphonoformate trisodium salt). Functionally, reversible hydration of carbon dioxide. The polypeptide is Carbonic anhydrase 13 (Ca13) (Mus musculus (Mouse)).